Consider the following 303-residue polypeptide: MAAGLSTIAVTLKPLNRSSFSANHPISTAVFPPSLRFNGFRRRKILTVCFVVEERKQSSPMDDDNKPESTTSSSEILMTSRLLKKAEKKKSERFTYLIAAVMSSFGITSMAIMAVYYRFSWQMKGGEVSVLEMFGTFALSVGAAVGMEFWARWAHRALWHDSLWNMHESHHKPREGAFELNDVFAITNAVPAIGLLYYGFLNKGLVPGLCFGAGLGITMFGMAYMFVHDGLVHKRFPVGPIANVPYLRKVAAAHQLHHTDKFKGVPYGLFLGPKEVEEVGGKEELEKEISRRIKLYNKGSSTS.

The N-terminal 52 residues, 1-52 (MAAGLSTIAVTLKPLNRSSFSANHPISTAVFPPSLRFNGFRRRKILTVCFVV), are a transit peptide targeting the chloroplast. A run of 2 helical transmembrane segments spans residues 96-116 (YLIA…MAVY) and 130-150 (VLEM…MEFW). The Fatty acid hydroxylase domain occupies 143–270 (AAVGMEFWAR…KFKGVPYGLF (128 aa)). The short motif at 155–160 (HRALWH) is the Histidine box-1 element. The Histidine box-2 signature appears at 165–171 (NMHESHH). 2 helical membrane passes run 180–200 (LNDV…YYGF) and 206–226 (VPGL…AYMF). A Histidine box-3 motif is present at residues 228–233 (HDGLVH). Positions 254–258 (HQLHH) match the Histidine box-4 motif.

Belongs to the sterol desaturase family. In terms of assembly, homodimer. As to expression, expressed in leaves, flowers, stems, roots and siliques.

The protein localises to the plastid. Its subcellular location is the chloroplast membrane. It catalyses the reaction all-trans-beta-carotene + 4 reduced [2Fe-2S]-[ferredoxin] + 2 O2 + 4 H(+) = all-trans-zeaxanthin + 4 oxidized [2Fe-2S]-[ferredoxin] + 2 H2O. Its function is as follows. Nonheme diiron monooxygenase involved in the biosynthesis of xanthophylls. Specific for beta-ring hydroxylations of beta-carotene. Also has a low activity toward the beta- and epsilon-rings of alpha-carotene. No activity with acyclic carotenoids such as lycopene and neurosporene. Uses ferredoxin as an electron donor. In Arabidopsis thaliana (Mouse-ear cress), this protein is Beta-carotene 3-hydroxylase 2, chloroplastic (BETA-OHASE 2).